Here is an 854-residue protein sequence, read N- to C-terminus: Translation initiation factor IF-2 (854 aa).

Residues 61-72 (KNIKTPTAKKPK) are compositionally biased toward basic residues. Disordered regions lie at residues 61–115 (KNIK…LASA) and 167–186 (ESLK…KKES). Basic and acidic residues predominate over residues 73-108 (KENAKDQEKLNESEKKEPKKEESKEQEKQEIIDTHK). A tr-type G domain is found at 353–520 (TRAPVITIMG…IVLLQADILE (168 aa)). The G1 stretch occupies residues 362–369 (GHVDHGKT). 362 to 369 (GHVDHGKT) lines the GTP pocket. Residues 387–391 (GITQH) form a G2 region. Residues 408-411 (DTPG) form a G3 region. GTP is bound by residues 408-412 (DTPGH) and 462-465 (NKMD). The interval 462–465 (NKMD) is G4. The G5 stretch occupies residues 498–500 (SAK).

Belongs to the TRAFAC class translation factor GTPase superfamily. Classic translation factor GTPase family. IF-2 subfamily.

It is found in the cytoplasm. Functionally, one of the essential components for the initiation of protein synthesis. Protects formylmethionyl-tRNA from spontaneous hydrolysis and promotes its binding to the 30S ribosomal subunits. Also involved in the hydrolysis of GTP during the formation of the 70S ribosomal complex. The sequence is that of Translation initiation factor IF-2 from Campylobacter jejuni subsp. doylei (strain ATCC BAA-1458 / RM4099 / 269.97).